We begin with the raw amino-acid sequence, 166 residues long: Endoribonuclease YbeY (166 aa).

Residues H132, H136, and H142 each contribute to the Zn(2+) site.

The protein belongs to the endoribonuclease YbeY family. It depends on Zn(2+) as a cofactor.

The protein resides in the cytoplasm. In terms of biological role, single strand-specific metallo-endoribonuclease involved in late-stage 70S ribosome quality control and in maturation of the 3' terminus of the 16S rRNA. This Clostridium botulinum (strain ATCC 19397 / Type A) protein is Endoribonuclease YbeY.